Reading from the N-terminus, the 269-residue chain is Troponin T, fast skeletal muscle (269 aa).

A compositionally biased stretch (acidic residues) spans 1-23 (MSDEEVEQVEEQYEEEEEAQEEA). The segment at 1–72 (MSDEEVEQVE…EKVDFDDIQK (72 aa)) is disordered. Ser2 carries the post-translational modification N-acetylserine. Position 2 is a phosphoserine (Ser2). Positions 24 to 34 (AEVHEEVHEPE) are enriched in basic and acidic residues. Acidic residues predominate over residues 35–47 (EVQEDTAEEDAEE). Residues 60 to 72 (PEGEKVDFDDIQK) show a composition bias toward basic and acidic residues. Ser88 carries the phosphoserine modification. Over residues 111–153 (RAERAEQQRIRAEKERERQNRLAEEKARREEEDAKRRAEDDLK) the composition is skewed to basic and acidic residues. A disordered region spans residues 111-158 (RAERAEQQRIRAEKERERQNRLAEEKARREEEDAKRRAEDDLKKKKAL). A phosphoserine mark is found at Ser159, Ser166, and Ser167. The segment at 245–269 (RIDQAQKHSKKAGTPAKGKVGGRWK) is disordered.

It belongs to the troponin T family. As to expression, in fetal and adult fast skeletal muscles, with a higher level expression in fetal than in adult muscle.

Functionally, troponin T is the tropomyosin-binding subunit of troponin, the thin filament regulatory complex which confers calcium-sensitivity to striated muscle actomyosin ATPase activity. This is Troponin T, fast skeletal muscle (TNNT3) from Homo sapiens (Human).